The primary structure comprises 285 residues: Glutamate racemase (285 aa).

Residues 28 to 29 and 60 to 61 each bind substrate; these read DS and YG. The Proton donor/acceptor role is filled by cysteine 92. Residue 93-94 coordinates substrate; sequence NT. Cysteine 204 functions as the Proton donor/acceptor in the catalytic mechanism. 205 to 206 lines the substrate pocket; sequence TH.

The protein belongs to the aspartate/glutamate racemases family.

The catalysed reaction is L-glutamate = D-glutamate. Its pathway is cell wall biogenesis; peptidoglycan biosynthesis. Its function is as follows. Provides the (R)-glutamate required for cell wall biosynthesis. This Escherichia coli (strain UTI89 / UPEC) protein is Glutamate racemase.